A 389-amino-acid chain; its full sequence is Urotensin-2 receptor (389 aa).

Polar residues predominate over residues 1–10 (MALTPESPSS). The segment at 1-39 (MALTPESPSSFPGLAATGSSVPEPPGGPNATLNSSWASP) is disordered. The Extracellular segment spans residues 1–54 (MALTPESPSSFPGLAATGSSVPEPPGGPNATLNSSWASPTEPSSLEDLVATGTI). 2 N-linked (GlcNAc...) asparagine glycosylation sites follow: Asn29 and Asn33. Residues 30 to 39 (ATLNSSWASP) show a composition bias toward polar residues. Residues 55-77 (GTLLSAMGVVGVVGNAYTLVVTC) form a helical membrane-spanning segment. Over 78–87 (RSLRAVASMY) the chain is Cytoplasmic. A helical membrane pass occupies residues 88 to 113 (VYVVNLALADLLYLLSIPFIVATYVT). At 114-124 (KEWHFGDVGCR) the chain is on the extracellular side. An intrachain disulfide couples Cys123 to Cys199. A helical transmembrane segment spans residues 125–146 (VLFGLDFLTMHASIFTLTVMSS). Residues 147-167 (ERYAAVLRPLDTVQRPKGYRK) lie on the Cytoplasmic side of the membrane. A helical membrane pass occupies residues 168-186 (LLALGTWLLALLLTLPVML). The Extracellular segment spans residues 187–209 (AMRLVRRGPKSLCLPAWGPRAHR). The chain crosses the membrane as a helical span at residues 210–232 (AYLTLLFATSIAGPGLLIGLLYA). Residues 233–258 (RLARAYRRSQRASFKRARRPGARALR) are Cytoplasmic-facing. The helical transmembrane segment at 259 to 284 (LVLGIVLLFWACFLPFWLWQLLAQYH) threads the bilayer. Residues 285–297 (QAPLAPRTARIVN) are Extracellular-facing. The chain crosses the membrane as a helical span at residues 298–318 (YLTTCLTYGNSCANPFLYTLL). Topologically, residues 319–389 (TRNYRDHLRG…PAPEGPRAPA (71 aa)) are cytoplasmic. A disordered region spans residues 328 to 389 (GRVRGPGSGG…PAPEGPRAPA (62 aa)). The segment covering 331-340 (RGPGSGGGRG) has biased composition (gly residues). Positions 355–368 (SGRSLSSCSPQPTD) are enriched in polar residues. Residues 377 to 389 (PARPAPEGPRAPA) show a composition bias toward pro residues.

Belongs to the G-protein coupled receptor 1 family. Most abundant expression in the heart and pancreas.

It localises to the cell membrane. High affinity receptor for urotensin-2 and urotensin-2B. The activity of this receptor is mediated by a G-protein that activate a phosphatidylinositol-calcium second messenger system. The sequence is that of Urotensin-2 receptor (UTS2R) from Homo sapiens (Human).